Here is a 26-residue protein sequence, read N- to C-terminus: Photosystem II stability/assembly factor HCF136, chloroplastic (26 aa).

It belongs to the Ycf48 family.

It localises to the plastid. The protein resides in the chloroplast thylakoid lumen. Essential for photosystem II (PSII) biogenesis; required for assembly of an early intermediate in PSII assembly that includes D2 (psbD) and cytochrome b559. The chain is Photosystem II stability/assembly factor HCF136, chloroplastic from Populus euphratica (Euphrates poplar).